The following is a 69-amino-acid chain: Conotoxin LvVID (69 aa).

Residues 1–17 form the signal peptide; that stretch reads VLIIAVLFLTACQLTTA. Residues 18-40 constitute a propeptide that is removed on maturation; the sequence is ETYPRGQQRHHALRSTDKNSKLT. 3 disulfides stabilise this stretch: cysteine 43–cysteine 57, cysteine 50–cysteine 61, and cysteine 56–cysteine 68.

It belongs to the conotoxin O1 superfamily. Expressed by the venom duct.

The protein localises to the secreted. The protein is Conotoxin LvVID of Conus lividus (Livid cone).